Consider the following 167-residue polypeptide: Cyclic pyranopterin monophosphate synthase 2 (167 aa).

The interval Met-1–Ala-23 is disordered. A compositionally biased stretch (basic and acidic residues) spans Arg-11–Ala-23. Substrate contacts are provided by residues Leu-86–His-88 and Met-122–Glu-123. Asp-137 is an active-site residue.

Belongs to the MoaC family. Homohexamer; trimer of dimers.

It catalyses the reaction (8S)-3',8-cyclo-7,8-dihydroguanosine 5'-triphosphate = cyclic pyranopterin phosphate + diphosphate. It participates in cofactor biosynthesis; molybdopterin biosynthesis. Functionally, catalyzes the conversion of (8S)-3',8-cyclo-7,8-dihydroguanosine 5'-triphosphate to cyclic pyranopterin monophosphate (cPMP). This chain is Cyclic pyranopterin monophosphate synthase 2 (moaC2), found in Mycobacterium bovis (strain ATCC BAA-935 / AF2122/97).